The following is a 253-amino-acid chain: Claudin domain-containing protein 1 (253 aa).

A helical transmembrane segment spans residues 5–25; it reads FATAFVIACVLSLISTIYMAA. Asn-42 and Asn-72 each carry an N-linked (GlcNAc...) asparagine glycan. 3 consecutive transmembrane segments (helical) span residues 141–161, 175–195, and 216–236; these read FLLP…GLCA, ILHL…VAGI, and FCLA…FIWA.

The protein belongs to the PMP-22/EMP/MP20 family.

The protein localises to the cell junction. It is found in the tight junction. It localises to the cell membrane. Plays a role in negatively regulating the permeability of cells to small molecules. The chain is Claudin domain-containing protein 1 (CLDND1) from Macaca fascicularis (Crab-eating macaque).